Reading from the N-terminus, the 834-residue chain is DNA-directed RNA polymerase subunit beta' (834 aa).

Over residues 1-22 (MTYSNKPTGSSLRSSRNSTLEP) the composition is skewed to polar residues. A disordered region spans residues 1 to 45 (MTYSNKPTGSSLRSSRNSTLEPQSLVHREESKRQEGPKGQNLRIG). Basic and acidic residues predominate over residues 26–36 (VHREESKRQEG). Residues Cys-101, Cys-103, Cys-118, and Cys-121 each coordinate Zn(2+). Residues Asp-606, Asp-608, and Asp-610 each coordinate Mg(2+).

The protein belongs to the RNA polymerase beta' chain family. RpoC1 subfamily. As to quaternary structure, in plastids the minimal PEP RNA polymerase catalytic core is composed of four subunits: alpha, beta, beta', and beta''. When a (nuclear-encoded) sigma factor is associated with the core the holoenzyme is formed, which can initiate transcription. Mg(2+) serves as cofactor. Requires Zn(2+) as cofactor.

The protein localises to the plastid. It is found in the chloroplast. It catalyses the reaction RNA(n) + a ribonucleoside 5'-triphosphate = RNA(n+1) + diphosphate. In terms of biological role, DNA-dependent RNA polymerase catalyzes the transcription of DNA into RNA using the four ribonucleoside triphosphates as substrates. This Staurastrum punctulatum (Green alga) protein is DNA-directed RNA polymerase subunit beta'.